A 499-amino-acid chain; its full sequence is MKRSISIFITCLLIAVLTMGGLLPSPASAAGTKTPVAKNGQLSIKGTQLVNRDGKAVQLKGISSHGLQWYGDFVNKDSLKWLRDDWGITVFRAAMYTADGGYIDNPSVKNKVKEAVEAAKELGIYVIIDWHILNDGNPNQNKEKAKEFFKEMSSLYGNTPNVIYEIANEPNGDVNWKRDIKPYAEEVISVIRKNDPDNIIIVGTGTWSQDVNDAADDQLKDANVMYALHFYAGTHGQSLRDKANYALSKGAPIFVTEWGTSDASGNGGVFLDQSREWLNYLDSKNISWVNWNLSDKQESSSALKPGASKTGGWPLTDLTASGTFVRENIRGTKDSTKDVPETPAQDNPTQEKGVSVQYKAGDGRVNSNQIRPQLHIKNNGNATVDLKDVTARYWYNVKNKGQNFDCDYAQMGCGNLTHKFVTLHKPKQGADTYLELGFKTGTLSPGASTGNIQLRLHNDDWSNYAQSGDYSFFQSNTFKTTKKITLYHQGKLIWGTEPN.

The N-terminal stretch at 1-29 is a signal peptide; sequence MKRSISIFITCLLIAVLTMGGLLPSPASA. Substrate contacts are provided by residues histidine 65, 69–70, tyrosine 96, and histidine 131; that span reads WY. Glutamate 169 acts as the Proton donor in catalysis. Position 231 (tyrosine 231) interacts with substrate. The Nucleophile role is filled by glutamate 257. Residues 263–264, tryptophan 291, and 296–298 each bind substrate; these read AS and KQE. Residues 330 to 340 show a composition bias toward basic and acidic residues; that stretch reads RGTKDSTKDVP. The disordered stretch occupies residues 330 to 353; the sequence is RGTKDSTKDVPETPAQDNPTQEKG. Positions 350–499 constitute a CBM3 domain; it reads QEKGVSVQYK…GKLIWGTEPN (150 aa).

The protein belongs to the glycosyl hydrolase 5 (cellulase A) family.

It catalyses the reaction Endohydrolysis of (1-&gt;4)-beta-D-glucosidic linkages in cellulose, lichenin and cereal beta-D-glucans.. The protein is Endoglucanase (bglC) of Bacillus subtilis.